The following is a 1228-amino-acid chain: P3N-PIPO polyprotein (1228 aa).

The region spanning 408-547 is the Peptidase S30 domain; that stretch reads IVGNSKINYI…RSVYAKMDQY (140 aa). Residues histidine 456, aspartate 465, and serine 499 each act as for P1 proteinase activity in the active site. An Involved in interaction with stylet and aphid transmission motif is present at residues 598 to 601; that stretch reads KITC. Positions 856 to 858 match the Involved in virions binding and aphid transmission motif; that stretch reads PTK. Positions 882–1004 constitute a Peptidase C6 domain; that stretch reads MYIAKKGYCY…DSEMKHYIVG (123 aa). Residues cysteine 890 and histidine 963 each act as for helper component proteinase activity in the active site.

It belongs to the potyviridae P3N-PIPO polyprotein family. Interacts (via PIPO domain) with host PCaP1 protein; this interaction may help to anchor the movement complex to the plasma membrane from which the complex could move to the plasmodesmata. In terms of processing, potyviral RNA is expressed as two polyproteins which undergo post-translational proteolytic processing. Genome polyprotein is processed by NIa-pro, P1 and HC-pro proteinases resulting in the production of at least ten individual proteins. P3N-PIPO is cleaved by P1 and HC-pro proteinases resulting in the production of three individual proteins. The P1 proteinase and the HC-pro cleave only their respective C-termini autocatalytically.

Its subcellular location is the host cell junction. The protein resides in the host plasmodesma. The catalysed reaction is Hydrolyzes a Gly-|-Gly bond at its own C-terminus, commonly in the sequence -Tyr-Xaa-Val-Gly-|-Gly, in the processing of the potyviral polyprotein.. Required for aphid transmission and also has proteolytic activity. Only cleaves a Gly-Gly dipeptide at its own C-terminus. Interacts with virions and aphid stylets. Acts as a suppressor of RNA-mediated gene silencing, also known as post-transcriptional gene silencing (PTGS), a mechanism of plant viral defense that limits the accumulation of viral RNAs. May have RNA-binding activity. Its function is as follows. Allows efficient cell to cell propagation, by bypassing the host cell wall barrier. Transports viral genome to neighboring plant cells directly through plasmosdesmata, without any budding. In Carica papaya (Papaya), this protein is P3N-PIPO polyprotein.